A 501-amino-acid polypeptide reads, in one-letter code: ADP,ATP carrier protein 3 (501 aa).

12 helical membrane-spanning segments follow: residues 23-43 (LKLF…FGAL), 59-79 (IISF…TVLY), 90-110 (YIFY…AYII), 146-166 (YALM…LMFW), 183-203 (PVLG…LVFF), 227-247 (IMLQ…MLLF), 293-313 (IALL…PWKA), 326-346 (VNFM…FMII), 361-381 (LLTP…IIFI), 387-407 (CFGD…QNIL), 446-466 (FGKS…PTAT), and 470-490 (IIIY…WNVI).

This sequence belongs to the ADP/ATP translocase tlc family.

The protein localises to the cell membrane. Its function is as follows. Provides the rickettsial cell with host ATP in exchange for rickettsial ADP. This is an obligate exchange system. This energy acquiring activity is an important component of rickettsial parasitism. This Rickettsia conorii (strain ATCC VR-613 / Malish 7) protein is ADP,ATP carrier protein 3 (tlcC).